A 313-amino-acid polypeptide reads, in one-letter code: MRNVTFRQLRTVEAVCRLGKINLAAEALGLTGPALTLQIQHLERDAGIALFDRTRGGMVPTAYGLAFLEAARAIEDSLIALEDSIDAIKGLRTGRLRLGVVSTGKYFAPQLIAAFRDQVPAVEINLFIGNRAEIIAKLRDHEIDIALMGRPPRDFEVRAQVFGDHPLVFIAPAGHPLAGVLEISRERIAQEQFLVREKGSGTRISLEIFLSDTPHELEELGTEIASNETIKQAVIAGLGIAFISAHTIEQEVKLGRLVILDVIDTPIRRQWFTVSRLDRVATPAMQAFERFVLASGARYLPVVSKPYPANAFG.

Positions 1-61 (MRNVTFRQLR…DRTRGGMVPT (61 aa)) constitute an HTH lysR-type domain. The H-T-H motif DNA-binding region spans 21–40 (INLAAEALGLTGPALTLQIQ).

This sequence belongs to the LysR transcriptional regulatory family.

Its function is as follows. Transcriptional activator for the cbb operon for RuBisCO and other Calvin cycle genes. The sequence is that of HTH-type transcriptional regulator CbbR (cbbR) from Rhizobium meliloti (strain 1021) (Ensifer meliloti).